Reading from the N-terminus, the 297-residue chain is N-acetylmuramic acid 6-phosphate etherase (297 aa).

One can recognise an SIS domain in the interval 55-218; the sequence is AAAALTRGGR…STGAMVKCGK (164 aa). Glu83 serves as the catalytic Proton donor. The active site involves Glu114.

The protein belongs to the GCKR-like family. MurNAc-6-P etherase subfamily. Homodimer.

It catalyses the reaction N-acetyl-D-muramate 6-phosphate + H2O = N-acetyl-D-glucosamine 6-phosphate + (R)-lactate. Its pathway is amino-sugar metabolism; 1,6-anhydro-N-acetylmuramate degradation. It participates in amino-sugar metabolism; N-acetylmuramate degradation. The protein operates within cell wall biogenesis; peptidoglycan recycling. Its function is as follows. Specifically catalyzes the cleavage of the D-lactyl ether substituent of MurNAc 6-phosphate, producing GlcNAc 6-phosphate and D-lactate. Together with AnmK, is also required for the utilization of anhydro-N-acetylmuramic acid (anhMurNAc) either imported from the medium or derived from its own cell wall murein, and thus plays a role in cell wall recycling. In Cronobacter sakazakii (strain ATCC BAA-894) (Enterobacter sakazakii), this protein is N-acetylmuramic acid 6-phosphate etherase.